The sequence spans 335 residues: Fructose-1,6-bisphosphatase class 1 (335 aa).

Glu92, Asp114, Leu116, and Asp117 together coordinate Mg(2+). Substrate contacts are provided by residues 117-120 (DGSS), Asn209, and Lys275. Glu281 serves as a coordination point for Mg(2+).

The protein belongs to the FBPase class 1 family. Homotetramer. Mg(2+) serves as cofactor.

It localises to the cytoplasm. The catalysed reaction is beta-D-fructose 1,6-bisphosphate + H2O = beta-D-fructose 6-phosphate + phosphate. Its pathway is carbohydrate biosynthesis; gluconeogenesis. The protein is Fructose-1,6-bisphosphatase class 1 of Delftia acidovorans (strain DSM 14801 / SPH-1).